The chain runs to 104 residues: Zinc-containing ferredoxin-1 (104 aa).

Residues 2-37 (GIDPNYRTNRQVVGEHSGHKVYGPVEPPKVLGIHGT) are N-terminal extension. 2 residues coordinate Zn(2+): His17 and His20. N6-methyllysine is present on Lys30. Zn(2+) is bound at residue His35. 2 4Fe-4S ferredoxin-type domains span residues 38–66 (IVGVDFDLCIADGSCINACPVNVFQWYDT) and 75–104 (KADPVNEQACIFCMACVNVCPVAAIDVKPP). The [3Fe-4S] cluster site is built by Cys46 and Cys52. Residue Cys56 coordinates [4Fe-4S] cluster. A Zn(2+)-binding site is contributed by Asp77. Positions 84, 87, and 90 each coordinate [4Fe-4S] cluster. Cys94 serves as a coordination point for [3Fe-4S] cluster.

[3Fe-4S] cluster serves as cofactor. Requires [4Fe-4S] cluster as cofactor. It depends on Zn(2+) as a cofactor.

Functionally, ferredoxins are iron-sulfur proteins that transfer electrons in a wide variety of metabolic reactions. This chain is Zinc-containing ferredoxin-1 (zfx1), found in Sulfurisphaera tokodaii (strain DSM 16993 / JCM 10545 / NBRC 100140 / 7) (Sulfolobus tokodaii).